The sequence spans 77 residues: Blood-induced peptide 1 (77 aa).

The stretch at 38 to 71 (EDFLHQENSELKKSLKNLEMENEKLKNILKTDYN) forms a coiled coil.

Functionally, plays an important role in survival in host blood through increasing tolerance to stresses such as heat, salt, or cycloheximide, which is essential for virulence. This chain is Blood-induced peptide 1, found in Candida albicans (strain SC5314 / ATCC MYA-2876) (Yeast).